The chain runs to 23 residues: GINTLKKVIQGLHEVIKLVSNHA.

In terms of tissue distribution, expressed by the skin glands.

Its subcellular location is the secreted. In terms of biological role, possesses antifungal activity against C.albicans and is also active against E.coli and S.aureus. In Pseudis paradoxa (Paradoxical frog), this protein is Pseudin-4.